The chain runs to 153 residues: MKKRAIVAVIVLLLIGLDQLVKSYIVQQIPLGEVRSWIPNFVSLTYLQNRGAAFSILQDQQLLFAVITLVVVIGAIWYLHKHMEDSFWMVLGLTLIIAGGLGNFIDRVSQGFVVDMFHLDFINFAIFNVADSYLTVGVIILLIAMLKEEINGN.

The next 3 helical transmembrane spans lie at 6-26 (IVAV…SYIV), 60-80 (QQLL…WYLH), and 85-105 (DSFW…GNFI). Residues D115 and D131 contribute to the active site. The helical transmembrane segment at 124–144 (FAIFNVADSYLTVGVIILLIA) threads the bilayer.

Belongs to the peptidase A8 family.

Its subcellular location is the cell membrane. It catalyses the reaction Release of signal peptides from bacterial membrane prolipoproteins. Hydrolyzes -Xaa-Yaa-Zaa-|-(S,diacylglyceryl)Cys-, in which Xaa is hydrophobic (preferably Leu), and Yaa (Ala or Ser) and Zaa (Gly or Ala) have small, neutral side chains.. Its pathway is protein modification; lipoprotein biosynthesis (signal peptide cleavage). Functionally, this protein specifically catalyzes the removal of signal peptides from prolipoproteins. This Streptococcus pneumoniae (strain ATCC BAA-255 / R6) protein is Lipoprotein signal peptidase.